Reading from the N-terminus, the 422-residue chain is SPbeta prophage-derived glycosyltransferase SunS (422 aa).

The protein belongs to the glycosyltransferase 2 family.

Transfers a hexose moiety onto 'Cys-41' of bacteriocin sublancin-168 (SunA). Accepts UDP-glucose (UDP-Glc), UDP-N-acetylglucosamine (UDP-GlcNAc), UDP-galactose (UDP-Gal), UDP-xylose (UDP-Xyl) and GDP-mannose as substrate. The protein is SPbeta prophage-derived glycosyltransferase SunS (sunS) of Bacillus subtilis (strain 168).